The primary structure comprises 153 residues: Ribosome maturation factor RimP (153 aa).

Belongs to the RimP family.

The protein resides in the cytoplasm. Its function is as follows. Required for maturation of 30S ribosomal subunits. The polypeptide is Ribosome maturation factor RimP (Synechococcus elongatus (strain ATCC 33912 / PCC 7942 / FACHB-805) (Anacystis nidulans R2)).